Consider the following 149-residue polypeptide: Nucleoside diphosphate kinase (149 aa).

ATP contacts are provided by lysine 9, phenylalanine 57, arginine 85, threonine 91, arginine 102, and asparagine 112. Histidine 115 functions as the Pros-phosphohistidine intermediate in the catalytic mechanism.

The protein belongs to the NDK family. Homotetramer. The cofactor is Mg(2+).

It localises to the cytoplasm. It carries out the reaction a 2'-deoxyribonucleoside 5'-diphosphate + ATP = a 2'-deoxyribonucleoside 5'-triphosphate + ADP. It catalyses the reaction a ribonucleoside 5'-diphosphate + ATP = a ribonucleoside 5'-triphosphate + ADP. Major role in the synthesis of nucleoside triphosphates other than ATP. The ATP gamma phosphate is transferred to the NDP beta phosphate via a ping-pong mechanism, using a phosphorylated active-site intermediate. The polypeptide is Nucleoside diphosphate kinase (Gloeobacter violaceus (strain ATCC 29082 / PCC 7421)).